The sequence spans 164 residues: Shikimate kinase (164 aa).

Residue 10 to 15 participates in ATP binding; sequence GVGKTT. T14 contacts Mg(2+). D28, R52, and G75 together coordinate substrate. Residue R116 coordinates ATP. R134 is a binding site for substrate. Residue R151 coordinates ATP.

This sequence belongs to the shikimate kinase family. Monomer. Mg(2+) serves as cofactor.

The protein resides in the cytoplasm. The enzyme catalyses shikimate + ATP = 3-phosphoshikimate + ADP + H(+). It participates in metabolic intermediate biosynthesis; chorismate biosynthesis; chorismate from D-erythrose 4-phosphate and phosphoenolpyruvate: step 5/7. Catalyzes the specific phosphorylation of the 3-hydroxyl group of shikimic acid using ATP as a cosubstrate. This chain is Shikimate kinase, found in Streptococcus equi subsp. zooepidemicus (strain MGCS10565).